Here is a 428-residue protein sequence, read N- to C-terminus: Proline--tRNA ligase (428 aa).

It belongs to the class-II aminoacyl-tRNA synthetase family. ProS type 2 subfamily. Homodimer.

It localises to the cytoplasm. It catalyses the reaction tRNA(Pro) + L-proline + ATP = L-prolyl-tRNA(Pro) + AMP + diphosphate. Its function is as follows. Catalyzes the attachment of proline to tRNA(Pro) in a two-step reaction: proline is first activated by ATP to form Pro-AMP and then transferred to the acceptor end of tRNA(Pro). The protein is Proline--tRNA ligase of Rickettsia typhi (strain ATCC VR-144 / Wilmington).